A 96-amino-acid chain; its full sequence is Beta-defensin 132 (96 aa).

The signal sequence occupies residues Met-1–Gly-22. 3 disulfide bridges follow: Cys-27/Cys-55, Cys-35/Cys-49, and Cys-39/Cys-56. The disordered stretch occupies residues His-74–Ser-96. Positions Gln-76–Lys-87 are enriched in basic residues.

This sequence belongs to the beta-defensin family.

It is found in the secreted. Functionally, has antibacterial activity. The protein is Beta-defensin 132 (DEFB132) of Hylobates lar (Lar gibbon).